The chain runs to 129 residues: Histone H2B.2 (129 aa).

Residues 1–19 (MAPKAEKKPASKAPAEKKP) show a composition bias toward basic and acidic residues. Positions 1 to 38 (MAPKAEKKPASKAPAEKKPAAKKTATSGTKKRSKTRKE) are disordered. Residues lysine 7 and lysine 8 each carry the N6-acetyllysine; alternate modification. Residues lysine 7 and lysine 8 each participate in a glycyl lysine isopeptide (Lys-Gly) (interchain with G-Cter in SUMO); alternate cross-link. Serine 11 bears the Phosphoserine mark. At lysine 12 the chain carries N6-acetyllysine. Position 17 is an N6-acetyllysine; alternate (lysine 17). Residue lysine 17 forms a Glycyl lysine isopeptide (Lys-Gly) (interchain with G-Cter in SUMO); alternate linkage. A Glycyl lysine isopeptide (Lys-Gly) (interchain with G-Cter in SUMO) cross-link involves residue lysine 18. Residue lysine 123 forms a Glycyl lysine isopeptide (Lys-Gly) (interchain with G-Cter in ubiquitin) linkage.

Belongs to the histone H2B family. In terms of assembly, the nucleosome is a histone octamer containing two molecules each of H2A, H2B, H3 and H4 assembled in one H3-H4 heterotetramer and two H2A-H2B heterodimers. The octamer wraps approximately 147 bp of DNA. Post-translationally, monoubiquitinated by the UBC2-BRE1 complex to form H2BK123ub1. H2BK123ub1 gives a specific tag for epigenetic transcriptional activation and is also prerequisite for H3K4me and H3K79me formation. H2BK123ub1 also modulates the formation of double-strand breaks during meiosis and is a prerequisite for DNA-damage checkpoint activation. In terms of processing, phosphorylated by STE20 to form H2BS10ph during progression through meiotic prophase. May be correlated with chromosome condensation. Acetylated by GCN5 to form H2BK11ac and H2BK16ac. H2BK16ac can also be formed by ESA1. Acetylation of N-terminal lysines and particularly formation of H2BK11acK16ac has a positive effect on transcription. Post-translationally, sumoylation to form H2BK6su or H2BK7su, and probably also H2BK16su or H2BK17su, occurs preferentially near the telomeres and represses gene transcription.

Its subcellular location is the nucleus. It localises to the chromosome. Functionally, core component of nucleosome. Nucleosomes wrap and compact DNA into chromatin, limiting DNA accessibility to the cellular machineries which require DNA as a template. Histones thereby play a central role in transcription regulation, DNA repair, DNA replication and chromosomal stability. DNA accessibility is regulated via a complex set of post-translational modifications of histones, also called histone code, and nucleosome remodeling. The polypeptide is Histone H2B.2 (HTB2) (Debaryomyces hansenii (strain ATCC 36239 / CBS 767 / BCRC 21394 / JCM 1990 / NBRC 0083 / IGC 2968) (Yeast)).